Reading from the N-terminus, the 496-residue chain is Rhamnulokinase (496 aa).

An ATP-binding site is contributed by 13–17 (ASSGR). Substrate-binding positions include Gly-83 and 236-238 (HDT). Asp-237 (proton acceptor) is an active-site residue. Thr-259 is a binding site for ATP. Residue Asn-296 coordinates substrate. Gln-304 contacts ATP. A disulfide bond links Cys-353 and Cys-370. Gly-402 serves as a coordination point for ATP. Cysteines 413 and 417 form a disulfide.

Belongs to the rhamnulokinase family. Requires Mg(2+) as cofactor.

It catalyses the reaction L-rhamnulose + ATP = L-rhamnulose 1-phosphate + ADP + H(+). It functions in the pathway carbohydrate degradation; L-rhamnose degradation; glycerone phosphate from L-rhamnose: step 2/3. Functionally, involved in the catabolism of L-rhamnose (6-deoxy-L-mannose). Catalyzes the transfer of the gamma-phosphate group from ATP to the 1-hydroxyl group of L-rhamnulose to yield L-rhamnulose 1-phosphate. The protein is Rhamnulokinase of Pectobacterium carotovorum subsp. carotovorum (strain PC1).